Consider the following 1639-residue polypeptide: RIMS-binding protein 3B (1639 aa).

Disordered regions lie at residues 1-22 (MAKDSPSPLGASPKKPGCSSPA), 215-240 (GSPDPQAVHSLEEPLPQTSSGSCHAP), and 295-364 (SLDS…LTPS). A coiled-coil region spans residues 21-143 (PAAAVLENQR…ELQRQLAEEL (123 aa)). The span at 326–339 (SPPPSPLPPPPPPS) shows a compositional bias: pro residues. Coiled-coil stretches lie at residues 409–442 (QADEKVKRLKVKRAELTGLARRLADRARELQETN) and 480–619 (LAKD…AEEN). Positions 697 to 811 (CRPGHPPEQP…DRDTASEVDD (115 aa)) are disordered. Composition is skewed to polar residues over residues 707–718 (WETSQMPESQVK) and 761–775 (SVPQVSETVPASQPL). Low complexity predominate over residues 776-790 (SKKTSSQSNSSSEGS). Positions 832–899 (PKLKIFMAQY…PSNFVEQIPD (68 aa)) constitute an SH3 1 domain. Fibronectin type-III domains are found at residues 995-1083 (APMQ…TLLA) and 1088-1184 (PPLE…IPED). 3 disordered regions span residues 1251 to 1273 (PRRQSPVSNLGSEGECPSSGAGS), 1292 to 1325 (QKSPQNHRPPSVSDQPGEKENCYQHMGTSKSPAP), and 1392 to 1413 (GTERREERREPEPHSRQGQALG). The segment covering 1293 to 1305 (KSPQNHRPPSVSD) has biased composition (polar residues). The segment covering 1392 to 1406 (GTERREERREPEPHS) has biased composition (basic and acidic residues). SH3 domains follow at residues 1452–1520 (TPAR…EMEV) and 1569–1636 (WTPK…HMSL).

The protein belongs to the RIMBP family. In terms of assembly, interacts with LRGUK (via guanylate kinase-like domain). Interacts (via C-terminus) with HOOK1 (via coiled-coil region).

It localises to the cytoplasm. It is found in the cytoskeleton. Probable component of the manchette, a microtubule-based structure which plays a key role in sperm head morphogenesis during late stages of sperm development. In Homo sapiens (Human), this protein is RIMS-binding protein 3B (RIMBP3B).